The chain runs to 252 residues: 5-oxoprolinase subunit A (252 aa).

Belongs to the LamB/PxpA family. In terms of assembly, forms a complex composed of PxpA, PxpB and PxpC.

The catalysed reaction is 5-oxo-L-proline + ATP + 2 H2O = L-glutamate + ADP + phosphate + H(+). Functionally, catalyzes the cleavage of 5-oxoproline to form L-glutamate coupled to the hydrolysis of ATP to ADP and inorganic phosphate. The polypeptide is 5-oxoprolinase subunit A (Staphylococcus carnosus (strain TM300)).